The chain runs to 198 residues: Density-regulated protein (198 aa).

N-acetylalanine is present on A2. S20 and S73 each carry phosphoserine. The disordered stretch occupies residues 72–110; that stretch reads NSPKQEAGISEGQGTAGEEEEKKKQKRGGRGQIKQKKKT. Residue T86 is modified to Phosphothreonine. The segment covering 95-110 has biased composition (basic residues); it reads KQKRGGRGQIKQKKKT. The 68-residue stretch at 115–182 folds into the SUI1 domain; the sequence is VTIAKIPRAK…DIIDVIQEKW (68 aa). Position 189 is a phosphoserine (S189).

Belongs to the DENR family. As to quaternary structure, interacts with MCTS1 (via PUA domain); the complex regulates translation reinitiation. In terms of tissue distribution, highly expressed in heart and skeletal muscle and moderately expressed in the brain, placenta, liver and pancreas. Weakly expressed in the lung and kidney.

It is found in the cytoplasm. Translation regulator forming a complex with MCTS1 to promote translation reinitiation. Translation reinitiation is the process where the small ribosomal subunit remains attached to the mRNA following termination of translation of a regulatory upstream ORF (uORF), and resume scanning on the same mRNA molecule to initiate translation of a downstream ORF, usually the main ORF (mORF). The MCTS1/DENR complex is pivotal to two linked mechanisms essential for translation reinitiation. Firstly, the dissociation of deacylated tRNAs from post-termination 40S ribosomal complexes during ribosome recycling. Secondly, the recruitment in an EIF2-independent manner of aminoacylated initiator tRNA to P site of 40S ribosomes for a new round of translation. This regulatory mechanism governs the translation of more than 150 genes which translation reinitiation is MCTS1/DENR complex-dependent. The chain is Density-regulated protein (DENR) from Homo sapiens (Human).